The following is an 87-amino-acid chain: Cytochrome c6 (87 aa).

Cys-10, Cys-13, His-14, and Met-56 together coordinate heme c.

The protein belongs to the cytochrome c family. PetJ subfamily. As to quaternary structure, monomer. In terms of processing, binds 1 heme c group covalently per subunit.

It localises to the plastid. The protein localises to the chloroplast thylakoid lumen. Functions as an electron carrier between membrane-bound cytochrome b6-f and photosystem I in oxygenic photosynthesis. The polypeptide is Cytochrome c6 (petJ) (Euglena gracilis).